A 113-amino-acid chain; its full sequence is MNTVRVTFLLVFVLAVSLGQADKDENRMEMQEKTEQGNSYLDFAENLLLQKLEELEAKLLEEDSEESRNSRQKRCIGEGVPCDENDPRCCSGLVCLKPTLHGIWYKSYYCYKK.

Positions 1 to 21 (MNTVRVTFLLVFVLAVSLGQA) are cleaved as a signal peptide. Positions 22–74 (DKDENRMEMQEKTEQGNSYLDFAENLLLQKLEELEAKLLEEDSEESRNSRQKR) are excised as a propeptide. A compositionally biased stretch (basic and acidic residues) spans 60–69 (LEEDSEESRN). Residues 60 to 83 (LEEDSEESRNSRQKRCIGEGVPCD) form a disordered region. Cystine bridges form between Cys-75–Cys-90, Cys-82–Cys-95, and Cys-89–Cys-110.

This sequence belongs to the neurotoxin 14 (magi-1) family. 01 (HNTX-16) subfamily. As to expression, expressed by the venom gland.

It is found in the secreted. Probable ion channel inhibitor. The protein is U11-theraphotoxin-Hhn1a of Cyriopagopus hainanus (Chinese bird spider).